The primary structure comprises 600 residues: UvrABC system protein C (600 aa).

Residues 15–92 (EKAGCYLMKD…IKKYQPYYNV (78 aa)) enclose the GIY-YIG domain. Positions 197–232 (QEVKKDLTNKMLQASADLEFERAGELRDQLKYIEET) constitute a UVR domain.

The protein belongs to the UvrC family. As to quaternary structure, interacts with UvrB in an incision complex.

The protein resides in the cytoplasm. Functionally, the UvrABC repair system catalyzes the recognition and processing of DNA lesions. UvrC both incises the 5' and 3' sides of the lesion. The N-terminal half is responsible for the 3' incision and the C-terminal half is responsible for the 5' incision. In Lactobacillus delbrueckii subsp. bulgaricus (strain ATCC BAA-365 / Lb-18), this protein is UvrABC system protein C.